A 165-amino-acid chain; its full sequence is Cyclic pyranopterin monophosphate synthase (165 aa).

Residues 83-85 and 120-121 contribute to the substrate site; these read FCH and ME. Residue D135 is part of the active site.

It belongs to the MoaC family. As to quaternary structure, homohexamer; trimer of dimers.

It carries out the reaction (8S)-3',8-cyclo-7,8-dihydroguanosine 5'-triphosphate = cyclic pyranopterin phosphate + diphosphate. Its pathway is cofactor biosynthesis; molybdopterin biosynthesis. Functionally, catalyzes the conversion of (8S)-3',8-cyclo-7,8-dihydroguanosine 5'-triphosphate to cyclic pyranopterin monophosphate (cPMP). The chain is Cyclic pyranopterin monophosphate synthase from Xanthomonas axonopodis pv. citri (strain 306).